A 159-amino-acid polypeptide reads, in one-letter code: Large ribosomal subunit protein uL23m (159 aa).

It belongs to the universal ribosomal protein uL23 family. In terms of assembly, component of the mitochondrial ribosome large subunit (39S) which comprises a 16S rRNA and about 50 distinct proteins.

It is found in the mitochondrion. This is Large ribosomal subunit protein uL23m (mrpl-23) from Caenorhabditis elegans.